Consider the following 129-residue polypeptide: UPF0344 protein SAB0838 (129 aa).

Helical transmembrane passes span 1–21, 36–56, 67–87, and 99–119; these read MLHL…ATYL, LHMV…WILI, MLLT…EVSI, and MFWI…ILPL.

It belongs to the UPF0344 family.

The protein localises to the cell membrane. The sequence is that of UPF0344 protein SAB0838 from Staphylococcus aureus (strain bovine RF122 / ET3-1).